The sequence spans 210 residues: T-cell surface glycoprotein CD8 beta chain (210 aa).

The first 21 residues, 1-21 (MRPRLWLLLAAQLTVLHGNSV), serve as a signal peptide directing secretion. Residues 22 to 132 (LQQTPAYIKV…ELTFGKGTQL (111 aa)) enclose the Ig-like V-type domain. Over 22-170 (LQQTPAYIKV…ETQKGPLCSP (149 aa)) the chain is Extracellular. Cysteine 41 and cysteine 116 are joined by a disulfide. Asparagine 102 is a glycosylation site (N-linked (GlcNAc...) asparagine). Residues 171–191 (ITLGLLVAGVLVLLVSLGVAI) traverse the membrane as a helical segment. Topologically, residues 192-210 (HLCCRRRRARLRFMKQFYK) are cytoplasmic. Tyrosine 209 is modified (phosphotyrosine).

As to quaternary structure, forms disulfide-linked heterodimers with CD8A at the cell surface. Interacts with CD3D; this interaction couples TCR-CD3 with CD8. Interacts with LCK. Phosphorylated as a consequence of T-cell activation. In terms of processing, palmitoylated at the cytoplasmic tail and thereby targets the heterodimer CD8A/CD8B to lipid rafts unlike CD8A homodimers. In terms of tissue distribution, isoform 1, isoform 3, isoform 5, isoform 6, isoform 7 and isoform 8 are expressed in both thymus and peripheral CD8+ T-cells. Expression of isoform 1 is higher in thymus CD8+ T-cells than in peripheral CD8+ T-cells. Expression of isoform 6 is higher in peripheral CD8+ T-cells than in thymus CD8+ T-cells.

The protein localises to the cell membrane. It localises to the secreted. In terms of biological role, integral membrane glycoprotein that plays an essential role in the immune response and serves multiple functions in responses against both external and internal offenses. In T-cells, functions primarily as a coreceptor for MHC class I molecule:peptide complex. The antigens presented by class I peptides are derived from cytosolic proteins while class II derived from extracellular proteins. Interacts simultaneously with the T-cell receptor (TCR) and the MHC class I proteins presented by antigen presenting cells (APCs). In turn, recruits the Src kinase LCK to the vicinity of the TCR-CD3 complex. A palmitoylation site in the cytoplasmic tail of CD8B chain contributes to partitioning of CD8 into the plasma membrane lipid rafts where signaling proteins are enriched. Once LCK recruited, it initiates different intracellular signaling pathways by phosphorylating various substrates ultimately leading to lymphokine production, motility, adhesion and activation of cytotoxic T-lymphocytes (CTLs). Additionally, plays a critical role in thymic selection of CD8+ T-cells. This is T-cell surface glycoprotein CD8 beta chain (CD8B) from Homo sapiens (Human).